The following is a 294-amino-acid chain: Indole-3-glycerol phosphate synthase (294 aa).

Belongs to the TrpC family.

The enzyme catalyses 1-(2-carboxyphenylamino)-1-deoxy-D-ribulose 5-phosphate + H(+) = (1S,2R)-1-C-(indol-3-yl)glycerol 3-phosphate + CO2 + H2O. It participates in amino-acid biosynthesis; L-tryptophan biosynthesis; L-tryptophan from chorismate: step 4/5. This chain is Indole-3-glycerol phosphate synthase, found in Synechococcus sp. (strain WH7803).